The chain runs to 1228 residues: ABC transporter B family member 16 (1228 aa).

The next 6 membrane-spanning stretches (helical) occupy residues Met-22–Ile-42, Leu-69–Trp-89, Leu-145–Trp-167, Ile-171–Gly-193, Gly-251–Gly-271, and Gly-283–Leu-303. The ABC transmembrane type-1 1 domain occupies Met-22 to Glu-311. Residues Val-346–Leu-582 form the ABC transporter 1 domain. ATP is bound at residue Gly-381–Ser-388. Asn-529, Asn-593, and Asn-628 each carry an N-linked (GlcNAc...) asparagine glycan. The ABC transmembrane type-1 2 domain maps to Ala-658–Lys-946. A run of 2 helical transmembrane segments spans residues Leu-667–Phe-687 and Ile-700–Gln-720. An N-linked (GlcNAc...) asparagine glycan is attached at Asn-755. The next 2 membrane-spanning stretches (helical) occupy residues Leu-781–Trp-801 and Ile-805–Leu-825. An N-linked (GlcNAc...) asparagine glycan is attached at Asn-827. A run of 2 helical transmembrane segments spans residues Ser-881 to Leu-901 and Phe-920 to Met-940. The ABC transporter 2 domain occupies Ile-981–Val-1219. An N-linked (GlcNAc...) asparagine glycan is attached at Asn-1001. ATP is bound at residue Gly-1016–Ser-1023.

Belongs to the ABC transporter superfamily. ABCB family. Multidrug resistance exporter (TC 3.A.1.201) subfamily.

Its subcellular location is the membrane. The sequence is that of ABC transporter B family member 16 (ABCB16) from Arabidopsis thaliana (Mouse-ear cress).